Consider the following 311-residue polypeptide: 33 kDa chaperonin (311 aa).

2 disulfide bridges follow: cysteine 240-cysteine 242 and cysteine 273-cysteine 276.

This sequence belongs to the HSP33 family. In terms of processing, under oxidizing conditions two disulfide bonds are formed involving the reactive cysteines. Under reducing conditions zinc is bound to the reactive cysteines and the protein is inactive.

It is found in the cytoplasm. Its function is as follows. Redox regulated molecular chaperone. Protects both thermally unfolding and oxidatively damaged proteins from irreversible aggregation. Plays an important role in the bacterial defense system toward oxidative stress. This is 33 kDa chaperonin from Trichodesmium erythraeum (strain IMS101).